The sequence spans 67 residues: Large ribosomal subunit protein uL29 (67 aa).

It belongs to the universal ribosomal protein uL29 family.

The protein is Large ribosomal subunit protein uL29 of Gemmatimonas aurantiaca (strain DSM 14586 / JCM 11422 / NBRC 100505 / T-27).